Reading from the N-terminus, the 194-residue chain is Outer membrane protein A (194 aa).

An N-terminal signal peptide occupies residues 1–24 (MNKPSKFALALAFAAVTASGVASA). Residues 30–38 (WRNPYGNVW) traverse the membrane as a beta stranded segment. One can recognise an OmpA-like domain in the interval 77-193 (MAAKVVFNAD…RVEIEIVGSR (117 aa)).

It belongs to the outer membrane OOP (TC 1.B.6) superfamily.

The protein localises to the cell outer membrane. Structural protein that may protect the integrity of the bacterium. This chain is Outer membrane protein A, found in Bordetella avium.